A 347-amino-acid chain; its full sequence is NADH-ubiquinone oxidoreductase chain 2 (347 aa).

The next 10 helical transmembrane spans lie at 1–21 (MNPL…AIVA), 25–45 (HWLM…PILM), 59–79 (YFLT…MNLV), 111–131 (FHFW…LILL), 149–169 (INLD…GWGG), 178–198 (IMAY…TYNP), 201–221 (TLLN…MFML), 237–257 (MPLL…LPPL), 274–294 (NSVI…YFYM), and 326–346 (LSPL…LALL).

This sequence belongs to the complex I subunit 2 family. Core subunit of respiratory chain NADH dehydrogenase (Complex I) which is composed of 45 different subunits. Interacts with TMEM242.

Its subcellular location is the mitochondrion inner membrane. It carries out the reaction a ubiquinone + NADH + 5 H(+)(in) = a ubiquinol + NAD(+) + 4 H(+)(out). Its function is as follows. Core subunit of the mitochondrial membrane respiratory chain NADH dehydrogenase (Complex I) which catalyzes electron transfer from NADH through the respiratory chain, using ubiquinone as an electron acceptor. Essential for the catalytic activity and assembly of complex I. This Pteropus rodricensis (Rodriguez flying fox) protein is NADH-ubiquinone oxidoreductase chain 2.